A 726-amino-acid chain; its full sequence is WD repeat and coiled-coil-containing protein (726 aa).

WD repeat units lie at residues 55–98 (GQFE…LDKN) and 154–194 (KSSG…LNAC). A disordered region spans residues 503–571 (SYDGDQSPTS…SSPPNFIKHG (69 aa)). The span at 506 to 515 (GDQSPTSSAN) shows a compositional bias: polar residues. Over residues 517–535 (FDDKRSKLRVESLDTEPKN) the composition is skewed to basic and acidic residues. Over residues 550–565 (SRPTSPKSECQKSSPP) the composition is skewed to polar residues. A coiled-coil region spans residues 581–609 (SISRNVERLCCNFAHLQQHLSELTDITRN).

The protein is WD repeat and coiled-coil-containing protein (wdcp) of Xenopus tropicalis (Western clawed frog).